Here is a 507-residue protein sequence, read N- to C-terminus: Microcystinase C (507 aa).

Residues 1-21 (MLDRRTLMGGILSMAGSKATG) form the signal peptide. Positions 167, 169, and 191 each coordinate Zn(2+).

The protein belongs to the peptidase M81 family. Requires Zn(2+) as cofactor.

With respect to regulation, inhibited by the metal chelators EDTA and 1,10-phenanthroline. Functionally, involved in peptidolytic degradation of cyclic heptapeptide hepatotoxin microcystin (MC). Cleaves both linear MC and the tetrapeptide degradation product of MC. Cleaves the Adda-Glu peptide bond of linear MC heptapeptides. The chain is Microcystinase C from Sphingomonas sp.